We begin with the raw amino-acid sequence, 157 residues long: Large ribosomal subunit protein uL15 (157 aa).

Positions 1 to 40 are disordered; sequence MKLHELSDNPGATKKRMRIGRGPGSGKGKMGGRGIKGQKS. Over residues 21–35 the composition is skewed to gly residues; the sequence is RGPGSGKGKMGGRGI.

The protein belongs to the universal ribosomal protein uL15 family. Part of the 50S ribosomal subunit.

Functionally, binds to the 23S rRNA. In Ruegeria pomeroyi (strain ATCC 700808 / DSM 15171 / DSS-3) (Silicibacter pomeroyi), this protein is Large ribosomal subunit protein uL15.